The following is a 91-amino-acid chain: Long neurotoxin OH-57 (91 aa).

The first 21 residues, 1 to 21, serve as a signal peptide directing secretion; the sequence is MKTLLLTLVVVTIVCLDLGYT. Cystine bridges form between Cys24/Cys41, Cys34/Cys62, Cys47/Cys51, Cys66/Cys77, and Cys78/Cys83.

It belongs to the three-finger toxin family. Long-chain subfamily. Type II alpha-neurotoxin sub-subfamily. Expressed by the venom gland.

Its subcellular location is the secreted. Its function is as follows. Binds with high affinity to muscular (alpha-1/CHRNA1) and neuronal (alpha-7/CHRNA7) nicotinic acetylcholine receptor (nAChR) and inhibits acetylcholine from binding to the receptor, thereby impairing neuromuscular and neuronal transmission. The chain is Long neurotoxin OH-57 from Ophiophagus hannah (King cobra).